The sequence spans 391 residues: Secreted aspartic protease 1 (391 aa).

The first 18 residues, 1–18 (MFLKNIFIALAIALLVDA), serve as a signal peptide directing secretion. A propeptide spans 19–50 (SPAKRSPGFVTLDFDVIKTPVNATGQEGKVKR) (activation peptide). N-linked (GlcNAc...) asparagine glycosylation is present at N40. Positions 64 to 377 (YAADITIGSN…DLDDDKISLA (314 aa)) constitute a Peptidase A1 domain. Residue D82 is part of the active site. Position 82–84 (82–84 (DTG)) interacts with pepstatin A. The cysteines at positions 97 and 109 are disulfide-linked. Residue 135–136 (GD) participates in pepstatin A binding. D241 and D263 together coordinate Zn(2+). D267 is a catalytic residue. 267 to 271 (DSGTT) is a pepstatin A binding site. A disulfide bond links C305 and C343.

The protein belongs to the peptidase A1 family. In terms of assembly, monomer.

The protein localises to the secreted. It carries out the reaction Preferential cleavage at the carboxyl of hydrophobic amino acids, but fails to cleave 15-Leu-|-Tyr-16, 16-Tyr-|-Leu-17 and 24-Phe-|-Phe-25 of insulin B chain. Activates trypsinogen, and degrades keratin.. Inhibited by pepstatin A analogs and squash aspartic peptidase inhibitor (SQAPI). Functionally, secreted aspartic peptidases (SAPs) are a group of ten acidic hydrolases considered as key virulence factors. These enzymes supply the fungus with nutrient amino acids as well as are able to degrade the selected host's proteins involved in the immune defense. Induces host inflammatory cytokine production in a proteolytic activity-independent way. Plays a role in tissue damage during superficial infection. Moreover, acts toward human hemoglobin though limited proteolysis to generate a variety of antimicrobial hemocidins, enabling to compete with the other microorganisms of the same physiological niche using the microbicidal peptides generated from the host protein. Plays a key role in defense against host by cleaving histatin-5 (Hst 5), a peptide from human saliva that carries out fungicidal activity. The cleavage rate decreases in an order of SAP2 &gt; SAP9 &gt; SAP3 &gt; SAP7 &gt; SAP4 &gt; SAP1 &gt; SAP8. The first cleavage occurs between residues 'Lys-17' and 'His-18' of Hst 5, giving DSHAKRHHGYKRKFHEK and HHSHRGY peptides. Further fragmentation by SAP1 results in AKRHHGYKRKFHEK and AKRHHGY products. The sequence is that of Secreted aspartic protease 1 from Candida albicans (strain SC5314 / ATCC MYA-2876) (Yeast).